A 1476-amino-acid chain; its full sequence is Cystic fibrosis transmembrane conductance regulator (1476 aa).

Over 1–77 (MQKSPLEKAS…QLIHALRRCF (77 aa)) the chain is Cytoplasmic. A helical transmembrane segment spans residues 78 to 98 (VWRFVFYGVLLYLGEVTKAVQ). An ABC transmembrane type-1 1 domain is found at 81–365 (FVFYGVLLYL…TAVQIWYDSL (285 aa)). Over 99 to 122 (PVLLGRIIASYDPDNTEERSIAIY) the chain is Extracellular. Residues 123–146 (LGIGLCLLFIVRTLLLHPAIFGLH) traverse the membrane as a helical segment. At 147-195 (HIGMQMRIAMFSLIYKKTLKLSSRVLDKISIGQLISLLSNNLNKFDEGL) the chain is on the cytoplasmic side. The chain crosses the membrane as a helical span at residues 196–216 (ALAHFIWIAPLQVVLLMGLLW). Residues 217-222 (DLLQFS) are Extracellular-facing. Residues 223–243 (AFCGLGLLIVLVIFQAILGKM) form a helical membrane-spanning segment. The Cytoplasmic segment spans residues 244-298 (MVKYRDKRAAKINERLVITSEVIDNIYSVKAYCWESAMEKIIESLREEELKMTRR). The helical transmembrane segment at 299 to 319 (SAYMRFFTSSAFFFSGFFVVF) threads the bilayer. Residues 320–339 (LSVLPYTVINGIVLRKIFTT) lie on the Extracellular side of the membrane. The chain crosses the membrane as a helical span at residues 340–358 (ISFCIVLRMSVTRQFPTAV). The Cytoplasmic portion of the chain corresponds to 359–853 (QIWYDSLGMI…YLRYFTLHRG (495 aa)). Residues tryptophan 401, 458–465 (GSTGAGKT), and glutamine 493 contribute to the ATP site. Residues 412 to 646 (VQLNNDDRKT…RPDFSSKLMG (235 aa)) enclose the ABC transporter 1 domain. The S-palmitoyl cysteine moiety is linked to residue cysteine 524. Residues serine 549 and serine 660 each carry the phosphoserine modification. Positions 654 to 826 (TEERRSSILT…EEINEEDLKE (173 aa)) are disordered R region. Serine 670 is modified (phosphoserine; by PKA). 3 positions are modified to phosphoserine: serine 684, serine 698, and serine 710. The residue at position 715 (threonine 715) is a Phosphothreonine. Residues serine 732, serine 763, serine 785, serine 790, and serine 808 each carry the phosphoserine modification. The chain crosses the membrane as a helical span at residues 854 to 874 (LFAVLIWCVLVFLVEVAASLF). The ABC transmembrane type-1 2 domain maps to 854 to 1153 (LFAVLIWCVL…SSIDTDSLMR (300 aa)). At 875-913 (VLWLLKNNPVNGGNNGTKIANTSYVVVITSSSFYYIFYI) the chain is on the extracellular side. 2 N-linked (GlcNAc...) asparagine glycosylation sites follow: asparagine 889 and asparagine 895. A discontinuously helical membrane pass occupies residues 914–934 (YVGVADTLLALSLFRGLPLVH). The Cytoplasmic segment spans residues 935-985 (TLITASKILHRKMLHSILHAPMSTFNKLKAGGILNRFSKDIAILDDFLPLT). A helical membrane pass occupies residues 986-1006 (IFDFIQLLFIVVGAIIVVSAL). The Extracellular portion of the chain corresponds to 1007–1008 (QP). Residues 1009–1029 (YIFLATVPGLAVFILLRAYFL) traverse the membrane as a helical segment. Topologically, residues 1030 to 1090 (HTSQQLKQLE…TANWFMYLAT (61 aa)) are cytoplasmic. The helical transmembrane segment at 1091-1111 (LRWFQMRIDMIFVLFFIVVTF) threads the bilayer. The Extracellular segment spans residues 1112–1125 (ISILTTGEGEGTTG). The helical transmembrane segment at 1126–1146 (IILTLAMNIMSTLQWAVNSSI) threads the bilayer. Over 1147 to 1476 (DTDSLMRSVS…TEEEVQETRL (330 aa)) the chain is Cytoplasmic. Residues 1208 to 1439 (VKDLTVKYVD…KSVFQRALSS (232 aa)) form the ABC transporter 2 domain. Residues tyrosine 1215 and 1240 to 1247 (GRTGSGKS) contribute to the ATP site. The tract at residues 1382–1476 (RVLRQAFAGC…TEEEVQETRL (95 aa)) is interaction with GORASP2. A lipid anchor (S-palmitoyl cysteine) is attached at cysteine 1391. Phosphoserine is present on residues serine 1440 and serine 1452. Basic residues predominate over residues 1445 to 1456 (LFHGRHSSKQKP). Residues 1445 to 1476 (LFHGRHSSKQKPRTQITAVKEETEEEVQETRL) form a disordered region. Residues 1466–1476 (ETEEEVQETRL) show a composition bias toward acidic residues. The PDZ-binding signature appears at 1474 to 1476 (TRL).

The protein belongs to the ABC transporter superfamily. ABCC family. CFTR transporter (TC 3.A.1.202) subfamily. As to quaternary structure, monomer; does not require oligomerization for channel activity. May form oligomers in the membrane. Interacts with SLC4A7 through NHERF1. Interacts with SHANK2. Interacts with NHERF1 and MYO6. Interacts (via C-terminus) with GOPC (via PDZ domain); this promotes CFTR internalization and thereby decreases channel activity. Interacts with SLC4A7 through NHERF1. Found in a complex with MYO5B and RAB11A. Interacts with ANO1. Interacts with SLC26A8. Interacts with AHCYL1; the interaction increases CFTR activity. Interacts with CSE1L. The core-glycosylated form interacts with GORASP2 (via PDZ GRASP-type 1 domain) in respone to ER stress. Interacts with MARCHF2; the interaction leads to CFTR ubiqtuitination and degradation. Interacts with ADGRG2. N-glycosylated. Post-translationally, phosphorylated; cAMP treatment promotes phosphorylation and activates the channel. Dephosphorylation decreases the ATPase activity (in vitro). Phosphorylation at PKA sites activates the channel. Phosphorylation at PKC sites enhances the response to phosphorylation by PKA. Phosphorylated by AMPK; this inhibits channel activity. In terms of processing, ubiquitinated, leading to its degradation in the lysosome. Deubiquitination by USP10 in early endosomes enhances its endocytic recycling to the cell membrane. Ubiquitinated by RNF185 during ER stress. Ubiquitinated by MARCHF2. As to expression, detected in epithelial cells in nasopharynx, submandibular gland, pancreas and ileum (at protein level). Expressed in the epididymis. In the caput section of the epididymis, expressed uniformly on both the luminal and basolateral sides of the ducts and on sperm in the caput lumen (at protein level). In the cauda, detected along the luminal border but not continuously and is also expressed on the basolateral surface. Within the caudal lumen, detected on sperm.

It localises to the apical cell membrane. It is found in the early endosome membrane. The protein localises to the cell membrane. The protein resides in the recycling endosome membrane. Its subcellular location is the endoplasmic reticulum membrane. It localises to the nucleus. It catalyses the reaction ATP + H2O + closed Cl(-) channel = ADP + phosphate + open Cl(-) channel.. The catalysed reaction is chloride(in) = chloride(out). The enzyme catalyses hydrogencarbonate(in) = hydrogencarbonate(out). It carries out the reaction ATP + H2O = ADP + phosphate + H(+). Epithelial ion channel that plays an important role in the regulation of epithelial ion and water transport and fluid homeostasis. Mediates the transport of chloride ions across the cell membrane. Possesses an intrinsic ATPase activity and utilizes ATP to gate its channel; the passive flow of anions through the channel is gated by cycles of ATP binding and hydrolysis by the ATP-binding domains. The ion channel is also permeable to HCO(3)(-); selectivity depends on the extracellular chloride concentration. Exerts its function also by modulating the activity of other ion channels and transporters. Contributes to the regulation of the pH and the ion content of the epithelial fluid layer. Modulates the activity of the epithelial sodium channel (ENaC) complex, in part by regulating the cell surface expression of the ENaC complex. May regulate bicarbonate secretion and salvage in epithelial cells by regulating the transporter SLC4A7. Can inhibit the chloride channel activity of ANO1. Plays a role in the chloride and bicarbonate homeostasis during sperm epididymal maturation and capacitation. This Rattus norvegicus (Rat) protein is Cystic fibrosis transmembrane conductance regulator.